Here is a 452-residue protein sequence, read N- to C-terminus: GTPase Der (452 aa).

EngA-type G domains are found at residues Pro-4–Glu-169 and Ile-177–Arg-352. Residues Gly-10–Ser-17, Asp-57–Leu-61, Asn-120–Glu-123, Gly-183–Ser-190, Asp-230–Ile-234, and Asn-295–Asp-298 each bind GTP. Positions Arg-353–Lys-438 constitute a KH-like domain.

The protein belongs to the TRAFAC class TrmE-Era-EngA-EngB-Septin-like GTPase superfamily. EngA (Der) GTPase family. As to quaternary structure, associates with the 50S ribosomal subunit.

In terms of biological role, GTPase that plays an essential role in the late steps of ribosome biogenesis. In Rippkaea orientalis (strain PCC 8801 / RF-1) (Cyanothece sp. (strain PCC 8801)), this protein is GTPase Der.